Reading from the N-terminus, the 449-residue chain is UDP-N-acetylmuramoylalanine--D-glutamate ligase (449 aa).

Residue 117–123 (GSNGKTT) participates in ATP binding.

This sequence belongs to the MurCDEF family.

The protein resides in the cytoplasm. It carries out the reaction UDP-N-acetyl-alpha-D-muramoyl-L-alanine + D-glutamate + ATP = UDP-N-acetyl-alpha-D-muramoyl-L-alanyl-D-glutamate + ADP + phosphate + H(+). It functions in the pathway cell wall biogenesis; peptidoglycan biosynthesis. Its function is as follows. Cell wall formation. Catalyzes the addition of glutamate to the nucleotide precursor UDP-N-acetylmuramoyl-L-alanine (UMA). The protein is UDP-N-acetylmuramoylalanine--D-glutamate ligase of Exiguobacterium sibiricum (strain DSM 17290 / CCUG 55495 / CIP 109462 / JCM 13490 / 255-15).